The chain runs to 377 residues: UPF0754 membrane protein lwe2241 (377 aa).

The next 2 helical transmembrane spans lie at 1 to 21 (MSVL…GAMT) and 357 to 377 (YLGG…AIWI).

It belongs to the UPF0754 family.

It is found in the cell membrane. This is UPF0754 membrane protein lwe2241 from Listeria welshimeri serovar 6b (strain ATCC 35897 / DSM 20650 / CCUG 15529 / CIP 8149 / NCTC 11857 / SLCC 5334 / V8).